The chain runs to 244 residues: uncharacterized protein (244 aa).

Residues 5–244 (QLLLAHRGYS…ANKKFEIKIN (240 aa)) enclose the GP-PDE domain.

It to glycerophosphoryl diester phosphodiesterases (EC 3.1.4.46). The protein to M.genitalium MG385.

This is an uncharacterized protein from Mycoplasma genitalium (strain ATCC 33530 / DSM 19775 / NCTC 10195 / G37) (Mycoplasmoides genitalium).